A 378-amino-acid polypeptide reads, in one-letter code: Erythronate-4-phosphate dehydrogenase (378 aa).

Positions 45 and 66 each coordinate substrate. NAD(+)-binding residues include Asp-146 and Thr-175. Residue Arg-208 is part of the active site. Residue Asp-232 coordinates NAD(+). Glu-237 is an active-site residue. The active-site Proton donor is His-254. Gly-257 lines the NAD(+) pocket. Residue Tyr-258 coordinates substrate.

The protein belongs to the D-isomer specific 2-hydroxyacid dehydrogenase family. PdxB subfamily. Homodimer.

The protein localises to the cytoplasm. The enzyme catalyses 4-phospho-D-erythronate + NAD(+) = (R)-3-hydroxy-2-oxo-4-phosphooxybutanoate + NADH + H(+). It participates in cofactor biosynthesis; pyridoxine 5'-phosphate biosynthesis; pyridoxine 5'-phosphate from D-erythrose 4-phosphate: step 2/5. Its function is as follows. Catalyzes the oxidation of erythronate-4-phosphate to 3-hydroxy-2-oxo-4-phosphonooxybutanoate. The sequence is that of Erythronate-4-phosphate dehydrogenase from Shigella dysenteriae serotype 1 (strain Sd197).